The sequence spans 95 residues: Beta-defensin 132 (95 aa).

The N-terminal stretch at 1 to 22 is a signal peptide; the sequence is MKFLLLVLAALRFLTQVIPASA. 3 cysteine pairs are disulfide-bonded: cysteine 27/cysteine 55, cysteine 35/cysteine 49, and cysteine 39/cysteine 56. The tract at residues 72-95 is disordered; the sequence is GNHWQSRRRNTQRKDKKQQTTVTS. Basic residues predominate over residues 76 to 87; that stretch reads QSRRRNTQRKDK.

This sequence belongs to the beta-defensin family.

The protein localises to the secreted. Its function is as follows. Has antibacterial activity. This Pongo pygmaeus (Bornean orangutan) protein is Beta-defensin 132 (DEFB132).